The sequence spans 221 residues: MSGVTSEPIAMDATRFQHTPYYCEENVYLLCKTLCENGVAEATCSDLFVVFISNEKKQVPLWHQKASTRADGVVLWDYHVICVQRKKESDSEPLVWDLDSTLPFPSPLASYVTETIQPSFQLFAEYQRFFRIVHAPLFFKHFASDRRHMKEPDGSWTAQPPPYEPIVAQDGILHNLSEYIAMSGADTLSSLDPETVTAAISQKLGVVVSHTQLQDLFTKLP.

N-acetylserine is present on S2. Active-site residues include C23, H79, and D97.

It belongs to the NTAQ1 family. As to quaternary structure, monomer.

It carries out the reaction N-terminal L-glutaminyl-[protein] + H2O = N-terminal L-glutamyl-[protein] + NH4(+). Mediates the side-chain deamidation of N-terminal glutamine residues to glutamate, an important step in N-end rule pathway of protein degradation. Conversion of the resulting N-terminal glutamine to glutamate renders the protein susceptible to arginylation, polyubiquitination and degradation as specified by the N-end rule. Does not act on substrates with internal or C-terminal glutamine and does not act on non-glutamine residues in any position. Involved in immune response. Controls the expression of specific defense-response genes, activates the synthesis pathway for the phytoalexin camalexin, and influences basal resistance to the hemibiotroph pathogen Pseudomonas syringae pv tomato (Pst). This chain is Protein N-terminal glutamine amidohydrolase, found in Arabidopsis thaliana (Mouse-ear cress).